The chain runs to 151 residues: Putative pre-16S rRNA nuclease (151 aa).

The protein belongs to the YqgF nuclease family.

It is found in the cytoplasm. Could be a nuclease involved in processing of the 5'-end of pre-16S rRNA. In Prochlorococcus marinus subsp. pastoris (strain CCMP1986 / NIES-2087 / MED4), this protein is Putative pre-16S rRNA nuclease.